The sequence spans 527 residues: Phosphoenolpyruvate carboxykinase (ATP) (527 aa).

Positions 55, 191, and 197 each coordinate substrate. Residues Lys197, His216, and 232–240 (GLSGTGKTT) each bind ATP. Positions 197 and 216 each coordinate Mn(2+). Asp253 is a binding site for Mn(2+). Residues Glu281, Arg318, and Thr443 each coordinate ATP. Residue Arg318 participates in substrate binding.

Belongs to the phosphoenolpyruvate carboxykinase (ATP) family. Mn(2+) is required as a cofactor.

The protein resides in the cytoplasm. The catalysed reaction is oxaloacetate + ATP = phosphoenolpyruvate + ADP + CO2. It functions in the pathway carbohydrate biosynthesis; gluconeogenesis. Functionally, involved in the gluconeogenesis. Catalyzes the conversion of oxaloacetate (OAA) to phosphoenolpyruvate (PEP) through direct phosphoryl transfer between the nucleoside triphosphate and OAA. The protein is Phosphoenolpyruvate carboxykinase (ATP) of Brevibacillus brevis (strain 47 / JCM 6285 / NBRC 100599).